The following is a 632-amino-acid chain: Biosynthetic arginine decarboxylase (632 aa).

The residue at position 101 (K101) is an N6-(pyridoxal phosphate)lysine. Position 281-291 (281-291) interacts with substrate; it reads FDVGGGLGVDY.

This sequence belongs to the Orn/Lys/Arg decarboxylase class-II family. SpeA subfamily. Mg(2+) serves as cofactor. Pyridoxal 5'-phosphate is required as a cofactor.

The enzyme catalyses L-arginine + H(+) = agmatine + CO2. It functions in the pathway amine and polyamine biosynthesis; agmatine biosynthesis; agmatine from L-arginine: step 1/1. Its function is as follows. Catalyzes the biosynthesis of agmatine from arginine. In Salmonella agona (strain SL483), this protein is Biosynthetic arginine decarboxylase.